The primary structure comprises 454 residues: Cholesterol 7-desaturase nvd (454 aa).

2 helical membrane-spanning segments follow: residues 13–33 (VLCP…LGAG) and 47–67 (TTLS…LWGW). The Rieske domain maps to 117–221 (WYRALDSHLL…SCELNGMVFV (105 aa)). Cys158, His160, Cys178, and His181 together coordinate [2Fe-2S] cluster.

Belongs to the cholesterol 7-desaturase family. [2Fe-2S] cluster serves as cofactor.

It localises to the membrane. The enzyme catalyses cholesterol + NADPH + O2 + H(+) = 7-dehydrocholesterol + NADP(+) + 2 H2O. It carries out the reaction cholesterol + NADH + O2 + H(+) = 7-dehydrocholesterol + NAD(+) + 2 H2O. It functions in the pathway steroid hormone biosynthesis; dafachronic acid biosynthesis. Catalyzes the production of 7-dehydrocholesterol (7-DHC or cholesta-5,7-dien-3beta-ol) by inserting a double bond (desaturating) at the C7-C8 single bond of cholesterol. This reaction is the first step in the synthesis of the steroid hormone Delta(7)-dafachronic acid. The protein is Cholesterol 7-desaturase nvd (nvd) of Xenopus laevis (African clawed frog).